The chain runs to 500 residues: Probable malate:quinone oxidoreductase (500 aa).

It belongs to the MQO family. FAD serves as cofactor.

The enzyme catalyses (S)-malate + a quinone = a quinol + oxaloacetate. Its pathway is carbohydrate metabolism; tricarboxylic acid cycle; oxaloacetate from (S)-malate (quinone route): step 1/1. This chain is Probable malate:quinone oxidoreductase, found in Gluconobacter oxydans (strain 621H) (Gluconobacter suboxydans).